The chain runs to 755 residues: MSGTNLDGNDEFDEQLRMQELYGDGKDGDTQTDAGGEPDSLGQQPTDTPYEWDLDKKAWFPKITEDFIATYQANYGFSNDGASSSTANVEDVHARTAEEPPQEKAPEPTDARKKGEKRKAESGWFHVEEDRNTNVYVSGLPPDITVDEFIQLMSKFGIIMRDPQTEEFKVKLYKDNQGNLKGDGLCCYLKRESVELALKLLDEDEIRGYKLHVEVAKFQLKGEYDASKKKKKCKDYKKKLSMQQKQLDWRPERRAGPSRMRHERVVIIKNMFHPMDFEDDPLVLNEIREDLRVECSKFGQIRKLLLFDRHPDGVASVSFRDPEEADYCIQTLDGRWFGGRQITAQAWDGTTDYQVEETSREREERLRGWEAFLNAPEANRGLRRSDSVSASERAGPSRARHFSEHPSTSKMNAQETATGMAFEEPIDEKKFEKTEDGGEFEEGASENNAKESSPEKEAEEGCPEKESEEGCPKRGFEGSCSQKESEEGNPVRGSEEDSPKKESKKKTLKNDCEENGLAKESEDDLNKESEEEVGPTKESEEDDSEKESDEDCSEKQSEDGSEREFEENGLEKDLDEEGSEKELHENVLDKELEENDSENSEFEDDGSEKVLDEEGSEREFDEDSDEKEEEEDTYEKVFDDESDEKEDEEYADEKGLEAADKKAEEGDADEKLFEESDDKEDEDADGKEVEDADEKLFEDDDSNEKLFDEEEDSSEKLFDDSDERGTLGGFGSVEEGPLSTGSSFILSSDDDDDDI.

Disordered stretches follow at residues 1–53 (MSGT…YEWD) and 81–122 (GASS…KAES). An N-acetylserine modification is found at Ser2. Residues 90–122 (EDVHARTAEEPPQEKAPEPTDARKKGEKRKAES) show a composition bias toward basic and acidic residues. 2 RRM domains span residues 133–218 (TNVY…VAKF) and 264–349 (RVVI…AWDG). Residues 259–353 (RMRHERVVII…AQAWDGTTDY (95 aa)) are U2AF homology motif (UHM). The residue at position 297 (Lys297) is an N6-acetyllysine. The segment at 380-415 (RGLRRSDSVSASERAGPSRARHFSEHPSTSKMNAQE) is disordered. Residues 381–755 (GLRRSDSVSA…LSSDDDDDDI (375 aa)) form a mediates interaction with the P-TEFb complex region. Phosphoserine occurs at positions 387, 403, 407, and 409. Polar residues predominate over residues 405 to 415 (HPSTSKMNAQE). Glycyl lysine isopeptide (Lys-Gly) (interchain with G-Cter in SUMO2) cross-links involve residues Lys429 and Lys430. The tract at residues 433 to 755 (KTEDGGEFEE…LSSDDDDDDI (323 aa)) is disordered. A phosphoserine mark is found at Ser445, Ser452, and Ser453. The span at 462 to 476 (CPEKESEEGCPKRGF) shows a compositional bias: basic and acidic residues. Phosphoserine is present on residues Ser481, Ser485, Ser494, Ser498, Ser521, and Ser529. Positions 508-538 (LKNDCEENGLAKESEDDLNKESEEEVGPTKE) are enriched in basic and acidic residues. A compositionally biased stretch (acidic residues) spans 539 to 552 (SEEDDSEKESDEDC). A compositionally biased stretch (basic and acidic residues) spans 553-563 (SEKQSEDGSER). Phosphoserine occurs at positions 557, 561, and 579. Acidic residues predominate over residues 564–579 (EFEENGLEKDLDEEGS). Positions 580-590 (EKELHENVLDK) are enriched in basic and acidic residues. Residues 591 to 606 (ELEENDSENSEFEDDG) show a composition bias toward acidic residues. Residues Ser597, Ser600, Ser607, Ser616, and Ser624 each carry the phosphoserine modification. Composition is skewed to acidic residues over residues 613–633 (EEGSEREFDEDSDEKEEEEDT) and 640–651 (DESDEKEDEEYA). The residue at position 633 (Thr633) is a Phosphothreonine. A Phosphoserine modification is found at Ser642. Basic and acidic residues predominate over residues 652 to 674 (DEKGLEAADKKAEEGDADEKLFE). Residues 675–713 (ESDDKEDEDADGKEVEDADEKLFEDDDSNEKLFDEEEDS) show a composition bias toward acidic residues. Phosphoserine occurs at positions 676, 702, 713, 714, and 721. The segment covering 714–725 (SEKLFDDSDERG) has biased composition (basic and acidic residues). Ser748 carries the post-translational modification Phosphoserine; by CK2.

This sequence belongs to the HTATSF1 family. In terms of assembly, component of the 17S U2 SnRNP complex, a ribonucleoprotein complex that contains small nuclear RNA (snRNA) U2 and a number of specific proteins. Within the 17S U2 SnRNP complex, interacts (via UHM region) directly with SF3B1. Component of a complex which is at least composed of HTATSF1/Tat-SF1, the P-TEFb complex components CDK9 and CCNT1, RNA polymerase II, SUPT5H, and NCL/nucleolin. Interacts with GTF2F2/RAP30 and POLR2A. Interacts with TCERG1/CA150. Interacts with (poly-ADP-ribosylated) RPA1; promoting HTATSF1 recruitment to DNA damage sites. Interacts (when phosphorylated) with TOPBP1; promoting recruitment of TOPBP1 to DNA damage sites during S-phase. In terms of processing, phosphorylation at Ser-748 by CK2 during S-phase in response to DNA damage promotes interaction with TOPBP1 and double-strand break (DSB) repair via homologous recombination. Widely expressed.

It is found in the nucleus. The protein localises to the chromosome. Its function is as follows. Component of the 17S U2 SnRNP complex of the spliceosome, a large ribonucleoprotein complex that removes introns from transcribed pre-mRNAs. The 17S U2 SnRNP complex (1) directly participates in early spliceosome assembly and (2) mediates recognition of the intron branch site during pre-mRNA splicing by promoting the selection of the pre-mRNA branch-site adenosine, the nucleophile for the first step of splicing. Within the 17S U2 SnRNP complex, HTATSF1 is required to stabilize the branchpoint-interacting stem loop. HTATSF1 is displaced from the 17S U2 SnRNP complex before the stable addition of the 17S U2 SnRNP complex to the spliceosome, destabilizing the branchpoint-interacting stem loop and allowing to probe intron branch site sequences. Also acts as a regulator of transcriptional elongation, possibly by mediating the reciprocal stimulatory effect of splicing on transcriptional elongation. Involved in double-strand break (DSB) repair via homologous recombination in S-phase by promoting the recruitment of TOPBP1 to DNA damage sites. Mechanistically, HTATSF1 is (1) recruited to DNA damage sites in S-phase via interaction with poly-ADP-ribosylated RPA1 and (2) phosphorylated by CK2, promoting recruitment of TOPBP1, thereby facilitating RAD51 nucleofilaments formation and RPA displacement, followed by homologous recombination. Functionally, (Microbial infection) In case of infection by HIV-1, it is up-regulated by the HIV-1 proteins NEF and gp120, acts as a cofactor required for the Tat-enhanced transcription of the virus. This is 17S U2 SnRNP complex component HTATSF1 from Homo sapiens (Human).